The chain runs to 119 residues: Protein yippee-like 3 (119 aa).

Residues 19–116 (RRYSCVHCRA…IELSHMIKDN (98 aa)) form the Yippee domain. Zn(2+)-binding residues include Cys-23, Cys-26, Cys-79, and Cys-82.

It belongs to the yippee family.

Its subcellular location is the nucleus. The protein resides in the nucleolus. Its function is as follows. May be involved in proliferation and apoptosis in myeloid precursor cells. In Oryzias latipes (Japanese rice fish), this protein is Protein yippee-like 3 (ypel3).